Here is a 432-residue protein sequence, read N- to C-terminus: DNA damage-binding protein 2 (432 aa).

The disordered stretch occupies residues 1 to 31; the sequence is MAPKKCPETQKSPDVAVLLRSKSRRGPQELE. An N6-acetyllysine mark is found at Lys35 and Lys77. 2 required for interaction with DDB1 regions span residues 68–79 and 87–98; these read SIVRDLYQHKLG and QQGLQKSFLHSL. 5 WD repeats span residues 116–151, 159–194, 203–238, 244–287, and 290–329; these read SLAWHPTHPSTLAVGSKGGDIMIWNFGIKDKPIFLK, ITGLKFNHLNTNQFFASSMEGTTRLQDFKGNILRVY, WFCSLDVSAKSRVVVTGDNMGHVILLSTDGKELWNL, KVAH…SLPH, and PVNAACFSPDGARLLTTDQNNEIRVYSASQWDSPLNLISH. Residues 256–274 carry the DWD box motif; sequence WLLATASIDQTVKIWDLRQ. The tract at residues 334 to 336 is photolesion recognition; it reads FQH. WD repeat units follow at residues 343 to 386 and 396 to 420; these read TWHS…MCQL and SLNEFNPMGDTLASTMGYHILIWSQ.

This sequence belongs to the WD repeat DDB2/WDR76 family. Component of the UV-DDB complex which includes DDB1 and DDB2. The UV-DDB complex interacts with monoubiquitinated histone H2A and binds to XPC via the DDB2 subunit. Component of the DCX (DDB1-CUL4-X-box) E3 ubiquitin-protein ligase complex DDB1-CUL4-ROC1 (also known as CUL4-DDB-ROC1 and CUL4-DDB-RBX1), which includes CUL4A or CUL4B, DDB1, DDB2 and RBX1. DDB2 may function as the substrate recognition module within this complex. The DDB1-CUL4-ROC1 complex may associate with the COP9 signalosome, and this inhibits the E3 ubiquitin-protein ligase activity of the complex. A large number of other DCX complexes may also exist in which an alternate substrate targeting subunit replaces DDB2. These targeting subunits are generally known as DCAF (DDB1- and CUL4-associated factor) or CDW (CUL4-DDB1-associated WD40-repeat) proteins. Post-translationally, phosphorylation by ABL1 negatively regulate UV-DDB activity. In terms of processing, ubiquitinated by CUL4A in response to UV irradiation. Ubiquitination appears to both impair DNA-binding and promotes ubiquitin-dependent proteolysis. Degradation of DDB2 at sites of DNA damage may be a prerequisite for their recognition by XPC and subsequent repair. CUL4A-mediated degradation appears to be promoted by ABL1. Ubiquitinated, leading to proteasomal degradation, and deubiquitinated by USP24. Deubiquitinated by USP44; leading to its stabilization on DNA lesions. Post-translationally, acetylated. Deacetylation by SIRT6 in response to UV stress facilitates nucleotide excision repair pathway (the NER pathway) transduction. As to expression, expressed in bone marrow, liver, lung, muscle, pancreas and spleen.

The protein localises to the nucleus. Its subcellular location is the chromosome. It functions in the pathway protein modification; protein ubiquitination. In terms of biological role, protein, which is both involved in DNA repair and protein ubiquitination, as part of the UV-DDB complex and DCX (DDB1-CUL4-X-box) complexes, respectively. Core component of the UV-DDB complex (UV-damaged DNA-binding protein complex), a complex that recognizes UV-induced DNA damage and recruit proteins of the nucleotide excision repair pathway (the NER pathway) to initiate DNA repair. The UV-DDB complex preferentially binds to cyclobutane pyrimidine dimers (CPD), 6-4 photoproducts (6-4 PP), apurinic sites and short mismatches. Also functions as the substrate recognition module for the DCX (DDB2-CUL4-X-box) E3 ubiquitin-protein ligase complex DDB2-CUL4-ROC1 (also known as CUL4-DDB-ROC1 and CUL4-DDB-RBX1). The DDB2-CUL4-ROC1 complex may ubiquitinate histone H2A, histone H3 and histone H4 at sites of UV-induced DNA damage. The ubiquitination of histones may facilitate their removal from the nucleosome and promote subsequent DNA repair. The DDB2-CUL4-ROC1 complex also ubiquitinates XPC, which may enhance DNA-binding by XPC and promote NER. The DDB2-CUL4-ROC1 complex also ubiquitinates KAT7/HBO1 in response to DNA damage, leading to its degradation: recognizes KAT7/HBO1 following phosphorylation by ATR. The chain is DNA damage-binding protein 2 (Ddb2) from Mus musculus (Mouse).